The primary structure comprises 354 residues: Polyribonucleotide 5'-hydroxyl-kinase PYRAB01840 (354 aa).

36 to 43 contacts ATP; it reads GDVDTGKT.

It depends on a divalent metal cation as a cofactor.

It catalyses the reaction a 5'-end dephospho-2'-deoxyribonucleoside-DNA + ATP = a 5'-end 5'-phospho-2'-deoxyribonucleoside-DNA + ADP + H(+). The catalysed reaction is a 5'-end dephospho-ribonucleoside-RNA + ATP = a 5'-end 5'-phospho-ribonucleoside-RNA + ADP + H(+). Polynucleotide kinase that can phosphorylate the 5'-hydroxyl groups of both single-stranded RNA (ssRNA) and single-stranded DNA (ssDNA). Exhibits a strong preference for ssRNA. This chain is Polyribonucleotide 5'-hydroxyl-kinase PYRAB01840, found in Pyrococcus abyssi (strain GE5 / Orsay).